Consider the following 484-residue polypeptide: Myosin-binding protein H (484 aa).

The interval 1-78 (MTGKATPEAS…KPEAPSEDVP (78 aa)) is disordered. Residues T2, T6, and T26 each carry the phosphothreonine modification. A compositionally biased stretch (low complexity) spans 41–71 (QEQAPEPQKQPQAQDPAAHEAPATPATTKPE). The 96-residue stretch at 80 to 175 (APLQLTLEDV…LDQPVHIQEI (96 aa)) folds into the Fibronectin type-III 1 domain. Residues 179–267 (PKIRVPRHLR…EGLEAKAAID (89 aa)) form the Ig-like C2-type 1 domain. In terms of domain architecture, Fibronectin type-III 2 spans 276–371 (PPSSIKLLDV…TKELAHIHKA (96 aa)). An Ig-like C2-type 2 domain is found at 389–479 (PSFTQPVADR…PAVDCRLEVK (91 aa)).

Belongs to the immunoglobulin superfamily. MyBP family. In terms of tissue distribution, skeletal muscle.

Binds to myosin; probably involved in interaction with thick myofilaments in the A-band. The chain is Myosin-binding protein H (Mybph) from Rattus norvegicus (Rat).